The following is a 383-amino-acid chain: MEFIGILCLILVATTIGSHISRRFGIPAVIGQLLVGVLLGQAGLGWVHPNILVHDFSEIGVILLMFLAGLESDLSLLKKYFKPGMFVALLGILFPVFFGWLTGEAFQVANNEAIFFGIILAATSVSISVEVLKELNVVNTKEGSTILGASVVDDILVVLVLSFSLSFLTGKSTSNLPLPLLLLEQLFYFLFIFLLVKWIAPFLMSLAEKIYANSAIIIMSLVICLGMSYLADLIGLSSVIGAFFAGIAVSQTKVKHEVYNNVEALGYAVFIPVFFVSVGLEVDFSKFSEQILFILILTLVAILTKLIGGYIGAKFSSFSSNSALMVGAGMISRGEMALIILQIGQQSNLIENHYYSPLVIVVLLSTLISPLILKYFTKKVYAN.

The next 12 helical transmembrane spans lie at Met-1–Ser-21, Phe-24–Leu-44, Ile-51–Glu-71, Pro-83–Gly-103, Glu-112–Leu-132, Thr-145–Leu-165, Leu-186–Leu-206, Ile-216–Leu-236, Val-262–Val-282, Ile-291–Ile-311, Ala-323–Ile-343, and His-353–Leu-373.

Belongs to the monovalent cation:proton antiporter 2 (CPA2) transporter (TC 2.A.37) family.

The protein localises to the cell membrane. In terms of biological role, na(+)/H(+) antiporter that extrudes sodium in exchange for external protons. Can also transport lithium. This is Na(+)/H(+) antiporter (napA) from Enterococcus hirae.